The chain runs to 172 residues: Peroxiredoxin AHP1 (172 aa).

One can recognise a Thioredoxin domain in the interval 4–171 (LQPGDSFPAN…VLTVLGNQGK (168 aa)). Residue K44 forms a Glycyl lysine isopeptide (Lys-Gly) (interchain with G-Cter in URM1) linkage. The active-site Cysteine sulfenic acid (-SOH) intermediate is C60. C60 carries the post-translational modification Cysteine persulfide. Residues K63, K99, K141, K156, and K171 each participate in a glycyl lysine isopeptide (Lys-Gly) (interchain with G-Cter in URM1) cross-link.

This sequence belongs to the peroxiredoxin family. Prx5 subfamily. In terms of assembly, homodimer; disulfide-linked, upon oxidation. In terms of processing, conjugated to URM1, a ubiquitin-like protein, in response to oxidative stresses. The attachment of URM1 to lysine residues exclusively depends on the presence of a peroxidatic cysteine in the target protein, with low specificity for the particular residue, motif, or structural context at which urmylation can occur. The URM1-conjugation reaction is mechanistically and directly coupled to the process of cysteine persulfidation, transfering the sulfur atom of the URM1 thiocarboxyl group to redox-active cysteine residues in the target protein if it is exposed to oxidative conditions. Post-translationally, persulfidated on specific redox-active cysteine residues. Persulfidation (also called protein S-sulfhydration) may provide a molecular mechanism that enables cells to protect vulnerable cysteine residues from reactive oxygen species (ROS) under stress conditions.

The protein resides in the cytoplasm. It carries out the reaction a hydroperoxide + [thioredoxin]-dithiol = an alcohol + [thioredoxin]-disulfide + H2O. In terms of biological role, thiol-specific peroxidase that catalyzes the reduction of hydrogen peroxide and organic hydroperoxides to water and alcohols, respectively. Plays a role in cell protection against oxidative stress by detoxifying peroxides and as sensor of hydrogen peroxide-mediated signaling events. Preferentially eliminates organic peroxides rather than hydrogen peroxide. Relays alkyl hydroperoxides as a signal to the transcription factor CAD1/YAP2 by inducing the formation of intramolecular disulfide bonds in CAD1, which causes its nuclear accumulation and activation. Involved in cellular Mn(2+) homeostasis. The sequence is that of Peroxiredoxin AHP1 (AHP1) from Chaetomium thermophilum (strain DSM 1495 / CBS 144.50 / IMI 039719) (Thermochaetoides thermophila).